We begin with the raw amino-acid sequence, 909 residues long: Cutinase transcription factor 1 alpha (909 aa).

The segment at 1-51 (MSSGDAPPQAQPQPHQQEQPNQRQSSTPAPSAAPVPPAPSTSTSNSAGGVS) is disordered. A compositionally biased stretch (low complexity) spans 12 to 30 (PQPHQQEQPNQRQSSTPAP). Residues 61-90 (CETCHARKVRCDAASLGVPCTNCVAFQIEC) constitute a DNA-binding region (zn(2)-C6 fungal-type). 3 disordered regions span residues 95-159 (PKRK…EAQA), 651-757 (AEGK…SFSV), and 841-878 (LPQG…QGQA). A compositionally biased stretch (basic and acidic residues) spans 110–119 (KDSDSDRGDG). Polar residues predominate over residues 142 to 156 (VFHSHNGTPPTTLTE). Basic and acidic residues predominate over residues 669 to 683 (QHSRQQEAPKRKYDE). Polar residues-rich tracts occupy residues 704–717 (PQTP…TSSM), 737–755 (GGTN…NPSF), and 865–878 (SPDS…QGQA).

The protein localises to the nucleus. The sequence is that of Cutinase transcription factor 1 alpha (CTF1-ALPHA) from Fusarium vanettenii (Neocosmospora pisi).